A 270-amino-acid polypeptide reads, in one-letter code: uncharacterized protein (270 aa).

The protein belongs to the GSP E family.

This is an uncharacterized protein from Methanocaldococcus jannaschii (strain ATCC 43067 / DSM 2661 / JAL-1 / JCM 10045 / NBRC 100440) (Methanococcus jannaschii).